Reading from the N-terminus, the 291-residue chain is Undecaprenyl-diphosphatase (291 aa).

8 helical membrane-spanning segments follow: residues 1–21 (MFII…LTEF), 48–68 (SAFT…AWVF), 102–122 (LHVL…DDFI), 126–146 (LFSV…MIIA), 162–182 (INYF…WPGF), 203–223 (SDFT…LSLL), 231–251 (IADI…GLIA), and 267–287 (FAIY…GFGI).

The protein belongs to the UppP family.

It is found in the cell membrane. It catalyses the reaction di-trans,octa-cis-undecaprenyl diphosphate + H2O = di-trans,octa-cis-undecaprenyl phosphate + phosphate + H(+). Catalyzes the dephosphorylation of undecaprenyl diphosphate (UPP). Confers resistance to bacitracin. This Staphylococcus aureus (strain Mu3 / ATCC 700698) protein is Undecaprenyl-diphosphatase.